Here is a 68-residue protein sequence, read N- to C-terminus: Protein SlyX homolog (68 aa).

This sequence belongs to the SlyX family.

The protein is Protein SlyX homolog of Brucella melitensis biotype 1 (strain ATCC 23456 / CCUG 17765 / NCTC 10094 / 16M).